The chain runs to 437 residues: Xylose isomerase (437 aa).

Residues H102 and D105 contribute to the active site. Mg(2+)-binding residues include E233, E269, H272, D297, D308, D310, and D340.

Belongs to the xylose isomerase family. In terms of assembly, homotetramer. It depends on Mg(2+) as a cofactor.

The protein resides in the cytoplasm. It carries out the reaction alpha-D-xylose = alpha-D-xylulofuranose. This is Xylose isomerase from Novosphingobium aromaticivorans (strain ATCC 700278 / DSM 12444 / CCUG 56034 / CIP 105152 / NBRC 16084 / F199).